Reading from the N-terminus, the 564-residue chain is 60 kDa lysophospholipase (564 aa).

In terms of domain architecture, Asparaginase/glutaminase spans 9 to 355 (RRLLAIYTGG…NDRKKLLAKD (347 aa)). The active-site Acyl-ester intermediate is the T19. Residues 41 to 350 (TLHMFHDEEY…PGLSLNDRKK (310 aa)) are asparaginase. Substrate contacts are provided by residues 84–86 (DSS) and 116–117 (TD). ANK repeat units follow at residues 141–170 (GAQV…YVIP), 396–426 (VLLP…DLNL), 430–459 (SGQT…DVDA), 463–492 (DGQS…RLSP), and 530–559 (DGHC…SVCA). S478 bears the Phosphoserine mark.

In the N-terminal section; belongs to the asparaginase 1 family. As to quaternary structure, monomer.

It carries out the reaction a 1-acyl-sn-glycero-3-phosphocholine + H2O = sn-glycerol 3-phosphocholine + a fatty acid + H(+). It catalyses the reaction L-asparagine + H2O = L-aspartate + NH4(+). The catalysed reaction is a 1-O-alkyl-2-acetyl-sn-glycero-3-phosphocholine + H2O = a 1-O-alkyl-sn-glycero-3-phosphocholine + acetate + H(+). The enzyme catalyses 1-hexadecanoyl-sn-glycero-3-phosphocholine + H2O = sn-glycerol 3-phosphocholine + hexadecanoate + H(+). It carries out the reaction 2 1-hexadecanoyl-sn-glycero-3-phosphocholine = 1,2-dihexadecanoyl-sn-glycero-3-phosphocholine + sn-glycerol 3-phosphocholine. It catalyses the reaction 1-octadecanoyl-sn-glycero-3-phosphocholine + H2O = octadecanoate + sn-glycerol 3-phosphocholine + H(+). The catalysed reaction is 1-(9Z-octadecenoyl)-sn-glycero-3-phosphocholine + H2O = sn-glycerol 3-phosphocholine + (9Z)-octadecenoate + H(+). The enzyme catalyses 1-hexadecanoyl-sn-glycero-3-phosphoethanolamine + H2O = sn-glycero-3-phosphoethanolamine + hexadecanoate + H(+). It carries out the reaction 1-(9Z-octadecenoyl)-sn-glycero-3-phosphoethanolamine + H2O = sn-glycero-3-phosphoethanolamine + (9Z)-octadecenoate + H(+). It catalyses the reaction 1-hexadecanoyl-sn-glycero-3-phosphoethanolamine + 1-hexadecanoyl-sn-glycero-3-phosphocholine = 1,2-dihexadecanoyl-sn-glycero-3-phosphoethanolamine + sn-glycerol 3-phosphocholine. The catalysed reaction is 2-(5Z,8Z,11Z,14Z)-eicosatetraenoyl-sn-glycero-3-phosphocholine + H2O = sn-glycerol 3-phosphocholine + (5Z,8Z,11Z,14Z)-eicosatetraenoate + H(+). The enzyme catalyses 2-hexadecanoyl-sn-glycero-3-phosphocholine + H2O = sn-glycerol 3-phosphocholine + hexadecanoate + H(+). It carries out the reaction 2 2-hexadecanoyl-sn-glycero-3-phosphocholine = 1,2-dihexadecanoyl-sn-glycero-3-phosphocholine + sn-glycerol 3-phosphocholine. It catalyses the reaction 1-O-(9Z)-octadecenoyl-2-O-acetyl-sn-glycero-3-phosphocholine + H2O = 2-acetyl-sn-glycero-3-phosphocholine + (9Z)-octadecenoate + H(+). The catalysed reaction is a 1-acyl-sn-glycero-3-phospho-(1D-myo-inositol) + 1-hexadecanoyl-sn-glycero-3-phosphocholine = a 1-acyl-2-hexadecanoyl-sn-glycero-3-phospho-(1D-myo-inositol) + sn-glycerol 3-phosphocholine. The enzyme catalyses 2 2-(5Z,8Z,11Z,14Z)-eicosatetraenoyl-sn-glycero-3-phosphocholine = 1,2-di-(5Z,8Z,11Z,14Z-eicosatetraenoyl)-sn-glycero-3-phosphocholine + sn-glycerol 3-phosphocholine. In terms of biological role, exhibits lysophospholipase, transacylase, PAF acetylhydrolase and asparaginase activities. Can catalyze three types of transacylation reactions: (1) acyl transfer from 1-acyl-sn-glycero-3-phosphocholine (1-acyl-GPC) to the sn-1(3) positions of glycerol and 2-acylglycerol (sn-1 to -1(3) transfer), (2) acyl transfer from 1-acyl-GPC to the sn-2 positions of 1-acyl-GPC, 1-acyl-sn-glycero-3-phosphoethanolamine (1-acyl-GPE), and other lysophospholipids (sn-1 to -2 transfer) and (3) acyl transfer from 2-acyl-GPC to the sn-1 position of 2-acyl-GPC and 2-acyl-GPE (sn-2 to -1 transfer). Mediates the synthesis of 1-arachidonoyl species of phospholipids by transferring the arachidonoyl residue from 2-arachidonoyl lysophospholipid to the sn-1 position of 2-acyl lysophospholipid. This chain is 60 kDa lysophospholipase (Aspg), found in Mus musculus (Mouse).